Consider the following 193-residue polypeptide: MKIVNTAFHISVSALSGLPEDSFPEIVFAGRSNVGKSTLLNSLTGVKGLAKTSATPGKTRLINYFLINRDVYFVDLPGYGYAAVGHAEKALWGNLLSSYIIQRRSISLVVLLLDSRHPAMQSDRAMISFLESHDRPYGIVLTKYDKLTQKEKVQTGRIMESCAAKAKFIVNYSSFSGKGKSELLAHFDQYICQ.

One can recognise an EngB-type G domain in the interval 22 to 193 (SFPEIVFAGR…LAHFDQYICQ (172 aa)). GTP-binding positions include 30–37 (GRSNVGKS), 57–61 (GKTRL), 75–78 (DLPG), 142–145 (TKYD), and 172–174 (YSS). Mg(2+)-binding residues include Ser37 and Thr59.

This sequence belongs to the TRAFAC class TrmE-Era-EngA-EngB-Septin-like GTPase superfamily. EngB GTPase family. Requires Mg(2+) as cofactor.

In terms of biological role, necessary for normal cell division and for the maintenance of normal septation. The protein is Probable GTP-binding protein EngB of Pelodictyon phaeoclathratiforme (strain DSM 5477 / BU-1).